The sequence spans 585 residues: Bestrophin-1 (585 aa).

The Cytoplasmic segment spans residues 1–31 (MTITYTSQVANARLGSFSRLLLCWRGSIYKL). Residue Ala10 participates in Ca(2+) binding. The helical transmembrane segment at 32–51 (LYGEFLIFLLCYYIIRFIYR) threads the bilayer. Residues 52-60 (LALTEEQQL) lie on the Extracellular side of the membrane. The chain crosses the membrane as a helical span at residues 61-82 (MFEKLTLYCDSYIQLIPISFVL). Residues 83–237 (GFYVTLVVTR…DWISIPLVYT (155 aa)) are Cytoplasmic-facing. Residues 238-255 (QVVTVAVYSFFLTCLVGR) form a helical membrane-spanning segment. The Extracellular segment spans residues 256-274 (QFLNPAKAYPGHELDLVVP). The helical transmembrane segment at 275-288 (VFTFLQFFFYVGWL) threads the bilayer. Residues 289–585 (KVAEQLINPF…ALENRDEAHS (297 aa)) lie on the Cytoplasmic side of the membrane. Positions 293, 296, 301, and 304 each coordinate Ca(2+). The interval 346–379 (PYTAASAQFRRASFMGSTFNISLNKEEMEFQPNQ) is auto-inhibitory segment.

It belongs to the anion channel-forming bestrophin (TC 1.A.46) family. Calcium-sensitive chloride channel subfamily. As to quaternary structure, interacts with YWHAG; this interaction promotes the ligand-gated L-glutamate channel activity leading to the positive regulation of NMDA glutamate receptor activity through the L-glutamate secretion. As to expression, predominantly expressed in the basolateral membrane of the retinal pigment epithelium.

It is found in the cell membrane. Its subcellular location is the basolateral cell membrane. It carries out the reaction chloride(in) = chloride(out). It catalyses the reaction hydrogencarbonate(in) = hydrogencarbonate(out). The catalysed reaction is 4-aminobutanoate(in) = 4-aminobutanoate(out). The enzyme catalyses L-glutamate(out) = L-glutamate(in). Inactivated by sulfhydryl-reactive agents. Ligand-gated anion channel that allows the movement of anions across cell membranes when activated by calcium (Ca2+). Allows the movement of chloride and hydrogencarbonate. Found in a partially open conformation leading to significantly smaller chloride movement. Upon F2R/PAR-1 activation, the sequestered calcium is released into the cytosol of astrocytes, leading to the (Ca2+)-dependent release of L-glutamate into the synaptic cleft that targets the neuronal postsynaptic GRIN2A/NMDAR receptor resulting in the synaptic plasticity regulation. Upon activation of the norepinephrine-alpha-1 adrenergic receptor signaling pathway, transports as well D-serine than L-glutamate in a (Ca2+)-dependent manner, leading to activation of adjacent NMDAR receptors and therefore regulates the heterosynaptic long-term depression and metaplasticity during initial memory acquisition. Releases the 4-aminobutanoate neurotransmitter in a (Ca2+)-dependent manner, and participates in its tonic release from cerebellar glial cells. This Homo sapiens (Human) protein is Bestrophin-1.